A 163-amino-acid polypeptide reads, in one-letter code: Nucleotide-binding protein CYB_0891 (163 aa).

It belongs to the YajQ family.

Its function is as follows. Nucleotide-binding protein. In Synechococcus sp. (strain JA-2-3B'a(2-13)) (Cyanobacteria bacterium Yellowstone B-Prime), this protein is Nucleotide-binding protein CYB_0891.